Reading from the N-terminus, the 4753-residue chain is Dynein heavy chain domain-containing protein 1 (4753 aa).

Coiled coils occupy residues 826-858 and 936-991; these read IHAIAQCTQKLNEANEQYVELEERMEYVRALHE and KLQQ…LSEL. The interval 2688–2766 is disordered; sequence HLGKDHQESE…SRGMKESISH (79 aa). Residues 2695–2712 show a composition bias toward acidic residues; sequence ESEEEEEEERVPEVESEG. The segment covering 2740–2751 has biased composition (polar residues); it reads RVSNSRDPSLTP. Coiled-coil stretches lie at residues 3125–3227, 3590–3651, and 4431–4460; these read LQQQ…MSKA, MRNQ…QGSK, and GAQLAERRLRQRLVQVNRRLESLQDLLTHV. The segment at 3580–3657 is disordered; the sequence is ALTEGRGKGL…QGSKPAYETQ (78 aa). The span at 3602-3615 shows a compositional bias: acidic residues; sequence KEEDDESEESNEAE. Over residues 3616-3631 the composition is skewed to basic and acidic residues; it reads DQTKEQKAEERKNEQE. Positions 3632 to 3641 are enriched in acidic residues; the sequence is KEQEENEEKE. Residues 4669–4697 are disordered; it reads ALQDSPSSQPSPLPPVSISTQAPGTSDLP.

Belongs to the dynein heavy chain family. In terms of tissue distribution, expressed in spermatozoa (at protein level).

It localises to the cell projection. The protein resides in the cilium. It is found in the flagellum. Essential for the normal assembly and function of sperm flagella axonemes. This Homo sapiens (Human) protein is Dynein heavy chain domain-containing protein 1 (DNHD1).